A 596-amino-acid polypeptide reads, in one-letter code: Protein NRT1/ PTR FAMILY 3.1 (596 aa).

Positions 1-16 (MEEQSKNKISEEEKQL) are enriched in basic and acidic residues. Residues 1-23 (MEEQSKNKISEEEKQLHGRPNRP) form a disordered region. The next 12 membrane-spanning stretches (helical) occupy residues 27-47 (LITMPFIFANEICEKLAVVGF), 73-93 (FAGTSSLTPLLGAFIADSFAG), 98-118 (ITFASIIYQIGMTLLTISAII), 137-157 (TAQLSILYVALLLGALGSGGI), 185-205 (NWYYFCMGAAVLLAVTVLVWI), 213-233 (LGLGIPTVAMFLSVIAFVGGF), 334-354 (MGPIGASGILLITAYAQQGTF), 372-392 (IPAGSMSVFTTVAMLTTIIFY), 416-436 (MGIGFVISIIATLVAGFVEVK), 453-473 (IVPISFLWLIPQYGLHGVAEA), 497-517 (ALFWMAISIGNYVSTLLVTLV), and 542-562 (YFYWLITVLQAVNLVYYLWCA).

The protein belongs to the major facilitator superfamily. Proton-dependent oligopeptide transporter (POT/PTR) (TC 2.A.17) family. In terms of tissue distribution, expressed in shoots, stems, leaves, flowers and siliques.

The protein localises to the membrane. Its function is as follows. May act as an efflux-type nitrite transporter. Not regulated by the PII protein involved in the regulation of nitrite uptake into higher plant chloroplasts. This is Protein NRT1/ PTR FAMILY 3.1 (NPF3.1) from Arabidopsis thaliana (Mouse-ear cress).